The primary structure comprises 392 residues: Phosphoglycerate kinase (392 aa).

Residues 21-23, Arg36, 59-62, Arg113, and Arg146 contribute to the substrate site; these read DFN and HLGR. ATP contacts are provided by residues Lys197, Glu319, and 345 to 348; that span reads GGDT.

It belongs to the phosphoglycerate kinase family. As to quaternary structure, monomer.

The protein localises to the cytoplasm. It catalyses the reaction (2R)-3-phosphoglycerate + ATP = (2R)-3-phospho-glyceroyl phosphate + ADP. Its pathway is carbohydrate degradation; glycolysis; pyruvate from D-glyceraldehyde 3-phosphate: step 2/5. The sequence is that of Phosphoglycerate kinase from Francisella tularensis subsp. holarctica (strain FTNF002-00 / FTA).